Reading from the N-terminus, the 828-residue chain is Protein ELFN1 (828 aa).

Residues 1-27 (MAGRGWGALWVCVAAATLLHAGGLARA) form the signal peptide. The Extracellular segment spans residues 28-418 (DCWLIEGDKG…VPSPSTATHY (391 aa)). The N-linked (GlcNAc...) asparagine glycan is linked to asparagine 59. 5 LRR repeats span residues 61–82 (TIVD…SLSR), 85–106 (NLTY…AFSG), 109–130 (NLQV…MLRG), 133–154 (KLEY…SFWE), and 157–178 (NIVN…TFAG). N-linked (GlcNAc...) asparagine glycosylation is found at asparagine 85, asparagine 90, and asparagine 122. Positions 190-252 (NPFYCSCELL…LSKLQSVCTE (63 aa)) constitute an LRRCT domain. Asparagine 210 is a glycosylation site (N-linked (GlcNAc...) asparagine). The segment at 259 to 291 (VVGPPRPASGRSQPGRSPPPPPPPEPSDMPCAD) is disordered. The segment covering 274 to 285 (RSPPPPPPPEPS) has biased composition (pro residues). The Fibronectin type-III domain maps to 312 to 399 (QAEARPLIKV…HNHTCLTICL (88 aa)). Residues 318–342 (LIKVKQLTQNSATITVQLPSPFHRM) form an LRR 6 repeat. Asparagine 376 carries N-linked (GlcNAc...) asparagine glycosylation. A helical membrane pass occupies residues 419 to 439 (IMTILGCLFGMVLVLGAVYYC). Residues 440–828 (LRRRRRQEEK…WKGVSAQHKS (389 aa)) lie on the Cytoplasmic side of the membrane. A Phosphoserine modification is found at serine 461. 3 disordered regions span residues 517-552 (TPKA…QSSV), 624-649 (LQRH…VRSP), and 696-732 (KGRQ…GLGR). The span at 529–541 (RTGDPPERRDCEL) shows a compositional bias: basic and acidic residues. Low complexity predominate over residues 632–649 (AAGPPRASTSSSGSVRSP). Position 645 is a phosphoserine (serine 645). The segment covering 696–705 (KGRQYGEHRH) has biased composition (basic and acidic residues). A compositionally biased stretch (pro residues) spans 713 to 727 (AEPPAPPGPPPPPPH).

Interacts with PPP1CA.

Its subcellular location is the membrane. The protein localises to the cell projection. It is found in the dendrite. Its function is as follows. Postsynaptic protein that regulates circuit dynamics in the central nervous system by modulating the temporal dynamics of interneuron recruitment. Specifically present in excitatory synapses onto oriens-lacunosum molecular (OLM) interneurons and acts as a regulator of presynaptic release probability to direct the formation of highly facilitating pyramidal-OLM synapses. Inhibits phosphatase activity of protein phosphatase 1 (PP1) complexes. In Homo sapiens (Human), this protein is Protein ELFN1 (ELFN1).